A 171-amino-acid polypeptide reads, in one-letter code: Translationally-controlled tumor protein homolog (171 aa).

Positions 1 to 171 (MKIWKDVFTG…FKHGLEEEKF (171 aa)) constitute a TCTP domain.

This sequence belongs to the TCTP family.

Its subcellular location is the cytoplasm. Its function is as follows. Involved in calcium binding and microtubule stabilization. This is Translationally-controlled tumor protein homolog from Anopheles gambiae (African malaria mosquito).